The chain runs to 212 residues: Pyrrolidone-carboxylate peptidase (212 aa).

Active-site residues include Glu78, Cys141, and His165.

This sequence belongs to the peptidase C15 family. As to quaternary structure, homotetramer.

It is found in the cytoplasm. It carries out the reaction Release of an N-terminal pyroglutamyl group from a polypeptide, the second amino acid generally not being Pro.. Functionally, removes 5-oxoproline from various penultimate amino acid residues except L-proline. This chain is Pyrrolidone-carboxylate peptidase, found in Staphylococcus aureus (strain Mu3 / ATCC 700698).